The chain runs to 213 residues: Probable nicotinate-nucleotide adenylyltransferase (213 aa).

The protein belongs to the NadD family.

It catalyses the reaction nicotinate beta-D-ribonucleotide + ATP + H(+) = deamido-NAD(+) + diphosphate. The protein operates within cofactor biosynthesis; NAD(+) biosynthesis; deamido-NAD(+) from nicotinate D-ribonucleotide: step 1/1. Its function is as follows. Catalyzes the reversible adenylation of nicotinate mononucleotide (NaMN) to nicotinic acid adenine dinucleotide (NaAD). The sequence is that of Probable nicotinate-nucleotide adenylyltransferase from Ruegeria pomeroyi (strain ATCC 700808 / DSM 15171 / DSS-3) (Silicibacter pomeroyi).